The primary structure comprises 350 residues: Uroporphyrinogen decarboxylase (350 aa).

Substrate is bound by residues 27 to 31 (RQAGR), Phe-46, Asp-76, Tyr-152, Ser-207, and His-321.

It belongs to the uroporphyrinogen decarboxylase family. Homodimer.

It localises to the cytoplasm. The enzyme catalyses uroporphyrinogen III + 4 H(+) = coproporphyrinogen III + 4 CO2. The protein operates within porphyrin-containing compound metabolism; protoporphyrin-IX biosynthesis; coproporphyrinogen-III from 5-aminolevulinate: step 4/4. Its function is as follows. Catalyzes the decarboxylation of four acetate groups of uroporphyrinogen-III to yield coproporphyrinogen-III. The chain is Uroporphyrinogen decarboxylase from Listeria welshimeri serovar 6b (strain ATCC 35897 / DSM 20650 / CCUG 15529 / CIP 8149 / NCTC 11857 / SLCC 5334 / V8).